A 267-amino-acid chain; its full sequence is Phosphoinositide-3-kinase-interacting protein 1 (267 aa).

Positions M1 to G21 are cleaved as a signal peptide. Residues S22–T172 are Extracellular-facing. In terms of domain architecture, Kringle spans G24–C101. Intrachain disulfides connect C25–C101, C46–C82, and C70–C96. The segment covering P91–C101 has biased composition (basic and acidic residues). Residues P91–E122 are disordered. The chain crosses the membrane as a helical span at residues L173–V193. Residues L194 to A267 lie on the Cytoplasmic side of the membrane.

Its subcellular location is the cell membrane. Functionally, negative regulator of hepatic phosphatidylinositol 3-kinase (PI3K) activity. In Rattus norvegicus (Rat), this protein is Phosphoinositide-3-kinase-interacting protein 1 (Pik3ip1).